A 209-amino-acid chain; its full sequence is Small ribosomal subunit protein uS4 (209 aa).

The Zn(2+) site is built by Cys-9, Cys-12, Cys-26, and Cys-31. A C4-type zinc finger spans residues 9–31 (CRLCRREGVKLYLKGERCYSPKC). Residues 100–162 (RLDNVVYRLG…RNLELIRQNL (63 aa)) enclose the S4 RNA-binding domain.

It belongs to the universal ribosomal protein uS4 family. As to quaternary structure, part of the 30S ribosomal subunit. Contacts protein S5. The interaction surface between S4 and S5 is involved in control of translational fidelity. The cofactor is Zn(2+).

Its function is as follows. One of the primary rRNA binding proteins, it binds directly to 16S rRNA where it helps nucleate assembly of the body and platform of the 30S subunit. The sequence is that of Small ribosomal subunit protein uS4 (rpsD) from Thermus thermophilus (strain ATCC BAA-163 / DSM 7039 / HB27).